The chain runs to 334 residues: Dual specificity mitogen-activated protein kinase kinase 6 (334 aa).

Positions 1–11 (MSQSKGKKRNP) are enriched in basic residues. The interval 1-34 (MSQSKGKKRNPGLKIPKEAFEQPQTSSTPPRDLD) is disordered. The tract at residues 4–19 (SKGKKRNPGLKIPKEA) is d domain. Residues 53-314 (LEPIVELGRG…YPELMQHPFF (262 aa)) enclose the Protein kinase domain. Residues 59 to 67 (LGRGAYGVV) and lysine 82 each bind ATP. Catalysis depends on aspartate 179, which acts as the Proton acceptor. A Phosphoserine; by MAPK3 modification is found at serine 207. Residue threonine 211 is modified to Phosphothreonine; by MAPK3. Residues 311-334 (HPFFTVHESKAADVASFVKLILGD) form a DVD domain region.

It belongs to the protein kinase superfamily. STE Ser/Thr protein kinase family. MAP kinase kinase subfamily. Dimer. Interacts (via its D domain) with its substrates MAPK11, MAPK12, MAPK13 and MAPK14. Interacts (via its DVD domain) with MAP3Ks activators like MAP3K5/ASK1, MAP3K1/MEKK1, MAP3K2/MEKK2, MAP3K3/MEKK3, MAP3K4/MEKK4, MAP3K7/TAK1, MAP3K11/MLK3 and MAP3K17/TAOK2. Interacts with DCTN1. Interacts with EIF2AK2/PKR. In terms of processing, weakly autophosphorylated. Phosphorylated at Ser-207 and Thr-211 by the majority of M3Ks, such as MAP3K5/ASK1, MAP3K1/MEKK1, MAP3K2/MEKK2, MAP3K3/MEKK3, MAP3K4/MEKK4, MAP3K7/TAK1, MAP3K11/MLK3 and MAP3K17/TAOK2. In response to genotoxic stress, MAP3K-phosphorylated MAP2K6 is ubiquitinated and degraded by the SCF(FBXO31) complex.

The protein localises to the nucleus. Its subcellular location is the cytoplasm. It localises to the cytoskeleton. The catalysed reaction is L-seryl-[protein] + ATP = O-phospho-L-seryl-[protein] + ADP + H(+). The enzyme catalyses L-threonyl-[protein] + ATP = O-phospho-L-threonyl-[protein] + ADP + H(+). It carries out the reaction L-tyrosyl-[protein] + ATP = O-phospho-L-tyrosyl-[protein] + ADP + H(+). Activated by dual phosphorylation on Ser-207 and Thr-211 in response to a variety of cellular stresses, including UV radiation, osmotic shock, hypoxia, inflammatory cytokines, interferon gamma (IFNG), and less often by growth factors. MAP2K6/MKK6 is activated by the majority of M3Ks, such as MAP3K5/ASK1, MAP3K1/MEKK1, MAP3K2/MEKK2, MAP3K3/MEKK3, MAP3K4/MEKK4, MAP3K7/TAK1, MAP3K11/MLK3 and MAP3K17/TAOK2. Dual specificity protein kinase which acts as an essential component of the MAP kinase signal transduction pathway. With MAP3K3/MKK3, catalyzes the concomitant phosphorylation of a threonine and a tyrosine residue in the MAP kinases p38 MAPK11, MAPK12, MAPK13 and MAPK14 and plays an important role in the regulation of cellular responses to cytokines and all kinds of stresses. Especially, MAP2K3/MKK3 and MAP2K6/MKK6 are both essential for the activation of MAPK11 and MAPK13 induced by environmental stress, whereas MAP2K6/MKK6 is the major MAPK11 activator in response to TNF. MAP2K6/MKK6 also phosphorylates and activates PAK6. The p38 MAP kinase signal transduction pathway leads to direct activation of transcription factors. Nuclear targets of p38 MAP kinase include the transcription factors ATF2 and ELK1. Within the p38 MAPK signal transduction pathway, MAP3K6/MKK6 mediates phosphorylation of STAT4 through MAPK14 activation, and is therefore required for STAT4 activation and STAT4-regulated gene expression in response to IL-12 stimulation. The pathway is also crucial for IL-6-induced SOCS3 expression and down-regulation of IL-6-mediated gene induction; and for IFNG-dependent gene transcription. Has a role in osteoclast differentiation through NF-kappa-B transactivation by TNFSF11, and in endochondral ossification and since SOX9 is another likely downstream target of the p38 MAPK pathway. MAP2K6/MKK6 mediates apoptotic cell death in thymocytes. Acts also as a regulator for melanocytes dendricity, through the modulation of Rho family GTPases. The sequence is that of Dual specificity mitogen-activated protein kinase kinase 6 (Map2k6) from Mus musculus (Mouse).